Consider the following 478-residue polypeptide: Proline--tRNA ligase (478 aa).

It belongs to the class-II aminoacyl-tRNA synthetase family. ProS type 3 subfamily. In terms of assembly, homodimer.

It is found in the cytoplasm. The catalysed reaction is tRNA(Pro) + L-proline + ATP = L-prolyl-tRNA(Pro) + AMP + diphosphate. Catalyzes the attachment of proline to tRNA(Pro) in a two-step reaction: proline is first activated by ATP to form Pro-AMP and then transferred to the acceptor end of tRNA(Pro). In Clostridium botulinum (strain Okra / Type B1), this protein is Proline--tRNA ligase.